Here is a 242-residue protein sequence, read N- to C-terminus: Phosphoribosylaminoimidazole-succinocarboxamide synthase (242 aa).

It belongs to the SAICAR synthetase family.

The catalysed reaction is 5-amino-1-(5-phospho-D-ribosyl)imidazole-4-carboxylate + L-aspartate + ATP = (2S)-2-[5-amino-1-(5-phospho-beta-D-ribosyl)imidazole-4-carboxamido]succinate + ADP + phosphate + 2 H(+). It participates in purine metabolism; IMP biosynthesis via de novo pathway; 5-amino-1-(5-phospho-D-ribosyl)imidazole-4-carboxamide from 5-amino-1-(5-phospho-D-ribosyl)imidazole-4-carboxylate: step 1/2. The sequence is that of Phosphoribosylaminoimidazole-succinocarboxamide synthase from Prochlorococcus marinus subsp. pastoris (strain CCMP1986 / NIES-2087 / MED4).